We begin with the raw amino-acid sequence, 164 residues long: R-phycoerythrin alpha chain (164 aa).

Positions 82 and 139 each coordinate (2R,3E)-phycoerythrobilin.

This sequence belongs to the phycobiliprotein family. In terms of assembly, heterodimer of an alpha and a beta chain. Contains two covalently linked bilin chromophores.

The protein resides in the plastid. Its subcellular location is the chloroplast thylakoid membrane. In terms of biological role, light-harvesting photosynthetic bile pigment-protein from the phycobiliprotein complex. This Lophosiphonia boldii (Red alga) protein is R-phycoerythrin alpha chain (cpeA).